The chain runs to 161 residues: MRCPSCNSLDTQVKDSRPTEDSSVIRRRRVCVTCNFRFTTFERVQLRELTVIKRNGRRVPFDRDKLMRSVQISLRKRSVDPERVEKMVSAIVRELESGGESEVSSEAIGEIVMEHLRDLDDVAYVRFASVYRNFREAKDFEAVLGELSAEDETPRLAPVRK.

Polar residues predominate over residues methionine 1–threonine 11. The tract at residues methionine 1–glutamate 20 is disordered. Residues cysteine 3–cysteine 34 fold into a zinc finger. The ATP-cone domain maps to leucine 49–aspartate 139.

The protein belongs to the NrdR family. The cofactor is Zn(2+).

In terms of biological role, negatively regulates transcription of bacterial ribonucleotide reductase nrd genes and operons by binding to NrdR-boxes. This chain is Transcriptional repressor NrdR, found in Bradyrhizobium sp. (strain ORS 278).